Reading from the N-terminus, the 396-residue chain is G-protein coupled receptor 84 (396 aa).

The Extracellular segment spans residues 1–26; that stretch reads MWNASDVNFSCYHESVLGYRYVAVSW. 2 N-linked (GlcNAc...) asparagine glycosylation sites follow: Asn3 and Asn8. A helical transmembrane segment spans residues 27 to 47; that stretch reads GIVVAVTGTVGNVLTLLALAI. Residues 48–57 lie on the Cytoplasmic side of the membrane; that stretch reads QPKLRTRFNL. The helical transmembrane segment at 58-78 threads the bilayer; the sequence is LIANLTVADLLYCTLLQPFSV. Over 79–94 the chain is Extracellular; the sequence is DTYLHLHWRTGATFCQ. Residues 95–115 form a helical membrane-spanning segment; sequence IFGFLLFVSNSVSILTLCLIA. Topologically, residues 116–144 are cytoplasmic; it reads LGRYLLIAHPKLFPQVFSAKGIVLALVST. Residues 145 to 165 form a helical membrane-spanning segment; that stretch reads WVVAVASFAPLWPIYILVPVV. Over 166-180 the chain is Extracellular; sequence CTCSFDRIRGQPYTT. Residues 181–201 form a helical membrane-spanning segment; sequence ILMGIYFVVGLSSVGVFYCLI. Residues 202-320 are Cytoplasmic-facing; it reads HQQVKRAAQA…PSEFGKVTRM (119 aa). Residues Ser221 and Ser224 each carry the phosphoserine modification. Residues 243 to 310 are disordered; it reads SGLASGGPSE…TKGAQRAQDS (68 aa). Thr263 and Thr264 each carry phosphothreonine. Residues 321-341 traverse the membrane as a helical segment; sequence CFAVFLCFTLSYIPFLLLNIL. Residues 342 to 352 are Extracellular-facing; it reads DAKVQAPRVVH. A helical membrane pass occupies residues 353–373; that stretch reads MLAANLTWLNGCINPVLYAAM. Residues 374 to 396 lie on the Cytoplasmic side of the membrane; the sequence is NRQFRQAYGSLLRRGPQSFHRFH.

This sequence belongs to the G-protein coupled receptor 1 family. In terms of assembly, interacts with ARRB2 and ARR3. In terms of processing, phosphorylated by a subset of GPR84-activating ligands. Constitutively phosphorylated at Ser-221 and Ser-224 in the absence of 2-HTP. By contrast, Thr-263 and Thr-264 are phosphorylated only following prior cell treatment with 2-HTP.

The protein localises to the cell membrane. In terms of biological role, g protein-coupled receptor that responds endogenously to dietary fatty acids or nutrient, specifically medium-chain free fatty acid (FFA) with carbon chain lengths of C9 to C14. Capric acid (C10:0), undecanoic acid (C11:0) and lauric acid (C12:0) are the most potent agonists. In immune cells, functions as a pro-inflammatory receptor via 6-OAU and promotes the expression of pro-inflammatory mediators such as TNFalpha, IL-6 and IL-12B as well as stimulating chemotactic responses through activation of signaling mediators AKT, ERK and NF-kappa-B. In addition, triggers increased bacterial adhesion and phagocytosis in macrophages and regulates pro-inflammatory function via enhancing NLRP3 inflammasome activation. Also plays an important role in inflammation by modulating neutrophil functions. Mechanistically, promotes neutrophil chemotaxis, reactive oxygen species (ROS) production and degranulation via LYN-AKT/ERK pathway. To regulate ROS, communicates with the two formyl peptide receptors FPR2 and FPR1 to control the NADPH oxidase activity in neutrophils. The sequence is that of G-protein coupled receptor 84 (GPR84) from Bos taurus (Bovine).